The chain runs to 268 residues: Nickel import ATP-binding protein NikE (268 aa).

The region spanning 4 to 252 (LNVSGLSHHY…SSDAGRVLQN (249 aa)) is the ABC transporter domain. ATP is bound at residue 45 to 52 (GRSGCGKS).

This sequence belongs to the ABC transporter superfamily. Nickel importer (TC 3.A.1.5.3) family. As to quaternary structure, the complex is composed of two ATP-binding proteins (NikD and NikE), two transmembrane proteins (NikB and NikC) and a solute-binding protein (NikA).

The protein localises to the cell inner membrane. The catalysed reaction is Ni(2+)(out) + ATP + H2O = Ni(2+)(in) + ADP + phosphate + H(+). Its function is as follows. Part of the ABC transporter complex NikABCDE involved in nickel import. Responsible for energy coupling to the transport system. This is Nickel import ATP-binding protein NikE from Shigella boydii serotype 4 (strain Sb227).